Reading from the N-terminus, the 305-residue chain is Ribonuclease BN (305 aa).

7 residues coordinate Zn(2+): histidine 64, histidine 66, aspartate 68, histidine 69, histidine 141, aspartate 212, and histidine 270. The active-site Proton acceptor is aspartate 68.

This sequence belongs to the RNase Z family. RNase BN subfamily. In terms of assembly, homodimer. Zn(2+) serves as cofactor.

Functionally, zinc phosphodiesterase, which has both exoribonuclease and endoribonuclease activities. This chain is Ribonuclease BN, found in Salmonella gallinarum (strain 287/91 / NCTC 13346).